The sequence spans 697 residues: Elongation factor G (697 aa).

Positions 8-287 (ERVRNIGIAA…AVVDYLPAPT (280 aa)) constitute a tr-type G domain. GTP contacts are provided by residues 17 to 24 (AHIDAGKT), 81 to 85 (DTPGH), and 135 to 138 (NKMD).

This sequence belongs to the TRAFAC class translation factor GTPase superfamily. Classic translation factor GTPase family. EF-G/EF-2 subfamily.

It is found in the cytoplasm. In terms of biological role, catalyzes the GTP-dependent ribosomal translocation step during translation elongation. During this step, the ribosome changes from the pre-translocational (PRE) to the post-translocational (POST) state as the newly formed A-site-bound peptidyl-tRNA and P-site-bound deacylated tRNA move to the P and E sites, respectively. Catalyzes the coordinated movement of the two tRNA molecules, the mRNA and conformational changes in the ribosome. This Arthrospira platensis (Spirulina platensis) protein is Elongation factor G (fusA).